Reading from the N-terminus, the 67-residue chain is ATP synthase F(0) complex subunit 8 (67 aa).

The chain crosses the membrane as a helical span at residues 8–24; the sequence is TWFINIVSMILTLFIVF. At Lys-54 the chain carries N6-acetyllysine; alternate. Lys-54 bears the N6-succinyllysine; alternate mark. Position 57 is an N6-acetyllysine (Lys-57).

It belongs to the ATPase protein 8 family. In terms of assembly, component of the ATP synthase complex composed at least of ATP5F1A/subunit alpha, ATP5F1B/subunit beta, ATP5MC1/subunit c (homooctomer), MT-ATP6/subunit a, MT-ATP8/subunit 8, ATP5ME/subunit e, ATP5MF/subunit f, ATP5MG/subunit g, ATP5MK/subunit k, ATP5MJ/subunit j, ATP5F1C/subunit gamma, ATP5F1D/subunit delta, ATP5F1E/subunit epsilon, ATP5PF/subunit F6, ATP5PB/subunit b, ATP5PD/subunit d, ATP5PO/subunit OSCP. ATP synthase complex consists of a soluble F(1) head domain (subunits alpha(3) and beta(3)) - the catalytic core - and a membrane F(0) domain - the membrane proton channel (subunits c, a, 8, e, f, g, k and j). These two domains are linked by a central stalk (subunits gamma, delta, and epsilon) rotating inside the F1 region and a stationary peripheral stalk (subunits F6, b, d, and OSCP). Interacts with PRICKLE3.

Its subcellular location is the mitochondrion membrane. Functionally, subunit 8, of the mitochondrial membrane ATP synthase complex (F(1)F(0) ATP synthase or Complex V) that produces ATP from ADP in the presence of a proton gradient across the membrane which is generated by electron transport complexes of the respiratory chain. ATP synthase complex consist of a soluble F(1) head domain - the catalytic core - and a membrane F(1) domain - the membrane proton channel. These two domains are linked by a central stalk rotating inside the F(1) region and a stationary peripheral stalk. During catalysis, ATP synthesis in the catalytic domain of F(1) is coupled via a rotary mechanism of the central stalk subunits to proton translocation. In vivo, can only synthesize ATP although its ATP hydrolase activity can be activated artificially in vitro. Part of the complex F(0) domain. In Equus caballus (Horse), this protein is ATP synthase F(0) complex subunit 8.